Consider the following 223-residue polypeptide: N-terminal Xaa-Pro-Lys N-methyltransferase 1-B (223 aa).

S-adenosyl-L-methionine contacts are provided by residues Gly69, Arg74, 91–93 (DVT), 119–120 (LQ), and Gln135.

This sequence belongs to the methyltransferase superfamily. NTM1 family.

Its subcellular location is the nucleus. The catalysed reaction is N-terminal L-alanyl-L-prolyl-L-lysyl-[protein] + 3 S-adenosyl-L-methionine = N-terminal N,N,N-trimethyl-L-alanyl-L-prolyl-L-lysyl-[protein] + 3 S-adenosyl-L-homocysteine + 3 H(+). It catalyses the reaction N-terminal L-seryl-L-prolyl-L-lysyl-[protein] + 3 S-adenosyl-L-methionine = N-terminal N,N,N-trimethyl-L-seryl-L-prolyl-L-lysyl-[protein] + 3 S-adenosyl-L-homocysteine + 3 H(+). The enzyme catalyses N-terminal L-prolyl-L-prolyl-L-lysyl-[protein] + 2 S-adenosyl-L-methionine = N-terminal N,N-dimethyl-L-prolyl-L-prolyl-L-lysyl-[protein] + 2 S-adenosyl-L-homocysteine + 2 H(+). Distributive alpha-N-methyltransferase that methylates the N-terminus of target proteins containing the N-terminal motif [Ala/Gly/Pro/Ser]-Pro-Lys when the initiator Met is cleaved. Specifically catalyzes mono-, di- or tri-methylation of the exposed alpha-amino group of the Ala, Gly or Ser residue in the [Ala/Gly/Ser]-Pro-Lys motif and mono- or di-methylation of Pro in the Pro-Pro-Lys motif. Required during mitosis for normal bipolar spindle formation and chromosome segregation via its action on target proteins. The protein is N-terminal Xaa-Pro-Lys N-methyltransferase 1-B (ntmt1-b) of Xenopus laevis (African clawed frog).